The chain runs to 76 residues: MNEVTFGEVIKSVRVSVVADVCGLTPKAIYKWLERGSLPRTEFTGETEYADKIAKASGGKYSAAQIRRIGKQQFVM.

The protein is 8.4 kDa cro protein (cro-HTT) of Escherichia coli (Bacteriophage HK022).